Reading from the N-terminus, the 92-residue chain is Conotoxin Im9.4 (92 aa).

The signal sequence occupies residues 1-20; that stretch reads MHRSLAGSAVLMLLLLFALG. A propeptide spanning residues 21-62 is cleaved from the precursor; the sequence is NFVGVQPGLVTRDADNGQLMDNRRNLRLERKTMSLFKSLDKR. 3 disulfides stabilise this stretch: Cys-65–Cys-79, Cys-69–Cys-81, and Cys-75–Cys-87. Asparagine amide is present on Asn-90.

The protein belongs to the conotoxin P superfamily. Expressed by the venom duct.

Its subcellular location is the secreted. Probable neurotoxin that inhibits ion channels. This Conus imperialis (Imperial cone) protein is Conotoxin Im9.4.